The primary structure comprises 303 residues: Rhomboid-related protein 2 (303 aa).

The tract at residues 20 to 39 (MKEELEEEEKMREDGGGKDR) is disordered. The segment covering 28–39 (EKMREDGGGKDR) has biased composition (basic and acidic residues). The next 7 membrane-spanning stretches (helical) occupy residues 72–92 (PVFI…YAVW), 128–148 (LVHA…VLGI), 159–179 (VGLV…IFDP), 183–203 (LVGA…NVLV), 212–232 (FGIF…GFAL), 245–265 (VSFA…YTVF), and 278–298 (FWIA…FNIF). The active-site Nucleophile is the Ser187. His250 is a catalytic residue.

The protein belongs to the peptidase S54 family. Proteolytic processing of the proenzyme produces a N-terminal fragment (NTF) and a C-terminal fragment (CTF). The processing is required for activation of the protease.

It is found in the cell membrane. The enzyme catalyses Cleaves type-1 transmembrane domains using a catalytic dyad composed of serine and histidine that are contributed by different transmembrane domains.. Its function is as follows. Involved in regulated intramembrane proteolysis and the subsequent release of functional polypeptides from their membrane anchors. Known substrate: EFNB3. This is Rhomboid-related protein 2 (RHBDL2) from Homo sapiens (Human).